A 290-amino-acid polypeptide reads, in one-letter code: Dehydrodolichyl diphosphate synthase CPT3 (290 aa).

Residue Asp42 is part of the active site.

This sequence belongs to the UPP synthase family. It depends on Mg(2+) as a cofactor. Expressed in leaf trichomes and stem trichomes. Expressed at low levels in young leaves, stems and old leaves.

It is found in the cytoplasm. Its subcellular location is the cytosol. It catalyses the reaction n isopentenyl diphosphate + (2E,6E)-farnesyl diphosphate = a di-trans,poly-cis-polyprenyl diphosphate + n diphosphate. Catalyzes cis-prenyl chain elongation to produce the polyprenyl backbone of dolichol, a glycosyl carrier-lipid required for the biosynthesis of several classes of glycoprotein. In Solanum lycopersicum (Tomato), this protein is Dehydrodolichyl diphosphate synthase CPT3.